A 172-amino-acid chain; its full sequence is RNA pyrophosphohydrolase (172 aa).

The region spanning 6 to 149 (GYRLNVGIVI…KRDVYRRAMK (144 aa)) is the Nudix hydrolase domain. A Nudix box motif is present at residues 38–59 (GGIDDGETPEQAMFRELYEEVG).

The protein belongs to the Nudix hydrolase family. RppH subfamily. The cofactor is a divalent metal cation.

In terms of biological role, accelerates the degradation of transcripts by removing pyrophosphate from the 5'-end of triphosphorylated RNA, leading to a more labile monophosphorylated state that can stimulate subsequent ribonuclease cleavage. The polypeptide is RNA pyrophosphohydrolase (Vibrio vulnificus (strain CMCP6)).